Here is a 208-residue protein sequence, read N- to C-terminus: Large ribosomal subunit protein uL3 (208 aa).

The segment at 124–146 is disordered; the sequence is HGQSRGPMAHGSRYHRRPGSMGP.

The protein belongs to the universal ribosomal protein uL3 family. Part of the 50S ribosomal subunit. Forms a cluster with proteins L14 and L19.

Functionally, one of the primary rRNA binding proteins, it binds directly near the 3'-end of the 23S rRNA, where it nucleates assembly of the 50S subunit. The polypeptide is Large ribosomal subunit protein uL3 (Streptococcus thermophilus (strain ATCC BAA-491 / LMD-9)).